The following is a 224-amino-acid chain: UPF0758 protein NE1464 (224 aa).

The 123-residue stretch at 102–224 (IMDSPQSVRN…VVSFAERGLI (123 aa)) folds into the MPN domain. Zn(2+) is bound by residues His173, His175, and Asp186. The JAMM motif signature appears at 173–186 (HNHPSGIAEPSTAD).

Belongs to the UPF0758 family.

This chain is UPF0758 protein NE1464, found in Nitrosomonas europaea (strain ATCC 19718 / CIP 103999 / KCTC 2705 / NBRC 14298).